The chain runs to 1120 residues: Mechanosensitive channel MscK (1120 aa).

The signal sequence occupies residues 1-33 (MTMFQYYKRSRHFVFSAFIAFVFVLLCQNTAFA). Topologically, residues 34 to 499 (RASSNGDLPT…MKITVNWQKA (466 aa)) are periplasmic. Coiled coils occupy residues 43–98 (TKAD…VAEA), 126–266 (STLS…TLTE), and 360–422 (DELE…RREL). The helical transmembrane segment at 500-520 (WPAVFIAFLAGLPLLLIAGLI) threads the bilayer. At 521–560 (HWRLGWLKAYQQKLASAVGSLRNDSQLNTPKAILIDLIRA) the chain is on the cytoplasmic side. A helical membrane pass occupies residues 561 to 581 (LPVCLIILAVGLILLTMQLNI). Position 582 (serine 582) is a topological domain, periplasmic. The chain crosses the membrane as a helical span at residues 583–603 (ELLWSFSKKLAIFWLVFGLCW). At 604–634 (KVLEKNGVAVRHFGMPEQQTSHWRRQIVRIS) the chain is on the cytoplasmic side. The helical transmembrane segment at 635-655 (LALLPIHFWSVVAELSPLHLM) threads the bilayer. Residues 656–657 (DD) lie on the Periplasmic side of the membrane. A helical transmembrane segment spans residues 658–678 (VLGQAMIFFNLLLIAFLVWPM). Over 679–692 (CRESWRDKESHTMR) the chain is Cytoplasmic. Residues 693–713 (LVTITVLSIIPIALMVLTATG) form a helical membrane-spanning segment. Residues 714–728 (YFYTTLRLAGRWIET) lie on the Periplasmic side of the membrane. The helical transmembrane segment at 729 to 749 (VYLVIIWNLLYQTVLRGLSVA) threads the bilayer. The Cytoplasmic segment spans residues 750 to 796 (ARRIAWRRALARRQNLVKEGAEGAEPPEEPTIALEQVNQQTLRITML). Residues 797–817 (LMFALFGVMFWAIWSDLITVF) form a helical membrane-spanning segment. The Periplasmic portion of the chain corresponds to 818-839 (SYLDSITLWHYNGTEAGAAVVK). A helical transmembrane segment spans residues 840–860 (NVTMGSLLFAIIASMVAWALI). Residues 861–886 (RNLPGLLEVLVLSRLNMRQGASYAIT) lie on the Cytoplasmic side of the membrane. Residues 887–907 (TILNYIIIAVGAMTVFGSLGV) form a helical membrane-spanning segment. The Periplasmic segment spans residues 908-921 (SWDKLQWLAAALSV). The helical transmembrane segment at 922-942 (GLGFGLQEIFGNFVSGLIILF) threads the bilayer. At 943–1120 (ERPVRIGDTV…KGDDPTPAVG (178 aa)) the chain is on the cytoplasmic side. Residues 1057-1081 (YVRELRDRSRTVDELNRTIDQLCRE) adopt a coiled-coil conformation.

The protein belongs to the MscS (TC 1.A.23) family.

Its subcellular location is the cell inner membrane. Its function is as follows. Mechanosensitive channel that opens in response to membrane tension and specific ionic conditions. Requires high concentrations of external K(+), NH(4)(+), Rb(+) or Cs(+) to gate. May participate in the regulation of osmotic pressure changes within the cell, although it does not appear to have a major role in osmolarity regulation. Forms an ion channel of 1.0 nanosiemens conductance. The channel can remain active for between 30 seconds and over 3 minutes; it does not desensitize upon extended pressure. Its activity is masked in wild-type cells by the MscS channel. In Escherichia coli (strain K12), this protein is Mechanosensitive channel MscK (mscK).